Consider the following 203-residue polypeptide: Peptide deformylase (203 aa).

Fe cation is bound by residues Cys-130 and His-173. Glu-174 is a catalytic residue. His-177 is a Fe cation binding site.

It belongs to the polypeptide deformylase family. The cofactor is Fe(2+).

The enzyme catalyses N-terminal N-formyl-L-methionyl-[peptide] + H2O = N-terminal L-methionyl-[peptide] + formate. Functionally, removes the formyl group from the N-terminal Met of newly synthesized proteins. Requires at least a dipeptide for an efficient rate of reaction. N-terminal L-methionine is a prerequisite for activity but the enzyme has broad specificity at other positions. This is Peptide deformylase from Streptococcus pneumoniae serotype 4 (strain ATCC BAA-334 / TIGR4).